Here is a 368-residue protein sequence, read N- to C-terminus: Propane 2-monooxygenase, hydroxylase component small subunit (368 aa).

The span at 1–17 (MSAPEKPRERSFPKIEF) shows a compositional bias: basic and acidic residues. A disordered region spans residues 1 to 32 (MSAPEKPRERSFPKIEFTDSEAGAKEFPSSKS).

Belongs to the TmoE/XamoE family. In terms of assembly, the propane 2-monooxygenase multicomponent enzyme system is composed of an electron transfer component and a monooxygenase component interacting with the effector protein MimD. The electron transfer component is composed of a reductase (MimB), and the monooxygenase component is formed by a large subunit (MimA) and a small subunit (MimC). Requires the presence of the chaperonin-like protein MimG to ensure a productive folding, resulting of a soluble MimC, which leads to the active form of MimABCD.

It catalyses the reaction propane + NADH + O2 + H(+) = propan-2-ol + NAD(+) + H2O. It carries out the reaction acetone + NADH + O2 + H(+) = hydroxyacetone + NAD(+) + H2O. The enzyme catalyses butan-2-one + NADH + O2 + H(+) = 1-hydroxy-2-butanone + NAD(+) + H2O. The catalysed reaction is phenol + NADH + O2 + H(+) = hydroquinone + NAD(+) + H2O. In terms of biological role, component of the propane 2-monooxygenase multicomponent enzyme system which is involved in the degradation of propane via the O2-dependent hydroxylation of propane. Also involved in the degradation of acetone via the O2-dependent hydroxylation of acetone. Also able to catalyze the oxidation of phenol, methylethylketone (2-butanone), 1-propanol and 2-propanol. The protein is Propane 2-monooxygenase, hydroxylase component small subunit of Mycolicibacterium smegmatis (strain ATCC 700084 / mc(2)155) (Mycobacterium smegmatis).